A 126-amino-acid polypeptide reads, in one-letter code: Antimicrobial protein 1 (126 aa).

Positions 1–24 (MRSSLLLGLTVVLLLGVTVPPCMA) are cleaved as a signal peptide.

Strongly expressed in gills, hemocytes and reproductive tract, with weaker expression in muscle, heart and digestive tract. Not detected in eyes and hepatopancreas (at protein level).

It localises to the secreted. In terms of biological role, has antibacterial activity against the Gram-positive bacteria E.coli (MIC&lt;50 ug/ml) and P.aeruginosa (MIC&lt;25 ug/ml), and the Gram-negative bacteria S.aureus (MIC&lt;100 ug/ml) and S.pyogenes (MIC&lt;50 ug/ml). This is Antimicrobial protein 1 from Scylla serrata (Mud crab).